Reading from the N-terminus, the 877-residue chain is Probable linoleate 9S-lipoxygenase 4 (877 aa).

The PLAT domain occupies 38-165 (GDFHASLLDG…NYQYERVFFA (128 aa)). In terms of domain architecture, Lipoxygenase spans 168 to 877 (TYLPSKMPAP…AMGIPNSISI (710 aa)). Positions 229–252 (GSQELPYPRRGRTGRAPTKTDPNT) are disordered. 5 residues coordinate Fe cation: His-528, His-533, His-719, Asn-723, and Ile-877.

It belongs to the lipoxygenase family. It depends on Fe cation as a cofactor.

The enzyme catalyses (9Z,12Z)-octadecadienoate + O2 = (9S)-hydroperoxy-(10E,12Z)-octadecadienoate. The protein operates within lipid metabolism; oxylipin biosynthesis. Functionally, plant lipoxygenase may be involved in a number of diverse aspects of plant physiology including growth and development, pest resistance, and senescence or responses to wounding. Catalyzes the hydroperoxidation of lipids containing a cis,cis-1,4-pentadiene structure. This is Probable linoleate 9S-lipoxygenase 4 from Oryza sativa subsp. japonica (Rice).